Consider the following 204-residue polypeptide: N-(5'-phosphoribosyl)anthranilate isomerase (204 aa).

Belongs to the TrpF family.

It carries out the reaction N-(5-phospho-beta-D-ribosyl)anthranilate = 1-(2-carboxyphenylamino)-1-deoxy-D-ribulose 5-phosphate. It functions in the pathway amino-acid biosynthesis; L-tryptophan biosynthesis; L-tryptophan from chorismate: step 3/5. This chain is N-(5'-phosphoribosyl)anthranilate isomerase, found in Oceanobacillus iheyensis (strain DSM 14371 / CIP 107618 / JCM 11309 / KCTC 3954 / HTE831).